The sequence spans 142 residues: Anti-sigma F factor (142 aa).

The protein belongs to the anti-sigma-factor family.

It carries out the reaction L-seryl-[protein] + ATP = O-phospho-L-seryl-[protein] + ADP + H(+). The catalysed reaction is L-threonyl-[protein] + ATP = O-phospho-L-threonyl-[protein] + ADP + H(+). Binds to sigma F and blocks its ability to form an RNA polymerase holoenzyme (E-sigma F). Phosphorylates SpoIIAA on a serine residue. This phosphorylation may enable SpoIIAA to act as an anti-anti-sigma factor that counteracts SpoIIAB and thus releases sigma F from inhibition. This chain is Anti-sigma F factor, found in Clostridium kluyveri (strain NBRC 12016).